The primary structure comprises 189 residues: UPF0232 protein MLBr00004 (189 aa).

Positions 59-78 (TDRRRNWSGPGPDVRDPQPL) are disordered.

Belongs to the UPF0232 family.

The sequence is that of UPF0232 protein MLBr00004 from Mycobacterium leprae (strain Br4923).